A 186-amino-acid chain; its full sequence is Pyridoxal 5'-phosphate synthase subunit PdxT (186 aa).

Position 46 to 48 (46 to 48 (GES)) interacts with L-glutamine. Residue Cys-75 is the Nucleophile of the active site. Residues Arg-101 and 128–129 (IR) each bind L-glutamine. Residues His-165 and Glu-167 each act as charge relay system in the active site.

This sequence belongs to the glutaminase PdxT/SNO family. In terms of assembly, in the presence of PdxS, forms a dodecamer of heterodimers. Only shows activity in the heterodimer.

The enzyme catalyses aldehydo-D-ribose 5-phosphate + D-glyceraldehyde 3-phosphate + L-glutamine = pyridoxal 5'-phosphate + L-glutamate + phosphate + 3 H2O + H(+). The catalysed reaction is L-glutamine + H2O = L-glutamate + NH4(+). It participates in cofactor biosynthesis; pyridoxal 5'-phosphate biosynthesis. Its function is as follows. Catalyzes the hydrolysis of glutamine to glutamate and ammonia as part of the biosynthesis of pyridoxal 5'-phosphate. The resulting ammonia molecule is channeled to the active site of PdxS. The protein is Pyridoxal 5'-phosphate synthase subunit PdxT of Methanocaldococcus jannaschii (strain ATCC 43067 / DSM 2661 / JAL-1 / JCM 10045 / NBRC 100440) (Methanococcus jannaschii).